The primary structure comprises 142 residues: Large ribosomal subunit protein uL13 (142 aa).

Belongs to the universal ribosomal protein uL13 family. As to quaternary structure, part of the 50S ribosomal subunit.

In terms of biological role, this protein is one of the early assembly proteins of the 50S ribosomal subunit, although it is not seen to bind rRNA by itself. It is important during the early stages of 50S assembly. The protein is Large ribosomal subunit protein uL13 of Pyrococcus horikoshii (strain ATCC 700860 / DSM 12428 / JCM 9974 / NBRC 100139 / OT-3).